The primary structure comprises 100 residues: Urease subunit gamma (100 aa).

Belongs to the urease gamma subunit family. Heterotrimer of UreA (gamma), UreB (beta) and UreC (alpha) subunits. Three heterotrimers associate to form the active enzyme.

Its subcellular location is the cytoplasm. It carries out the reaction urea + 2 H2O + H(+) = hydrogencarbonate + 2 NH4(+). The protein operates within nitrogen metabolism; urea degradation; CO(2) and NH(3) from urea (urease route): step 1/1. The polypeptide is Urease subunit gamma (Proteus hauseri).